The primary structure comprises 302 residues: RELT-like protein 2 (302 aa).

The helical transmembrane segment at 15–35 threads the bilayer; the sequence is LYMLFLLVLVFFLMGLVGFMI. Disordered stretches follow at residues 47 to 68, 135 to 164, 177 to 212, and 247 to 302; these read RTSR…DDVN, CSRS…TTVF, RYGL…GQPR, and VPCT…AGGM. Ser-52 carries the post-translational modification Phosphoserine. 2 stretches are compositionally biased toward basic and acidic residues: residues 148 to 158 and 177 to 188; these read RSKEGKGRPRP and RYGLHEHRDGSP. Over residues 277–294 the composition is skewed to polar residues; sequence QEANGQPTKLDTSGQQDS.

This sequence belongs to the RELT family. In terms of assembly, interacts with RELT, RELL1, OXSR1, PLSCR1 and TRAF2.

The protein resides in the cell membrane. Its function is as follows. Induces activation of MAPK14/p38 cascade, when overexpressed. Induces apoptosis, when overexpressed. This chain is RELT-like protein 2 (Rell2), found in Rattus norvegicus (Rat).